Here is a 1353-residue protein sequence, read N- to C-terminus: MIHSVFLLMFLLTPTESYVDVGPDSVKSACIEVDIQQTFFDKTWPRPIDVSKADGIIYPQGRTYSNITITYQGLFPYQGDHGDMYVYSAGHATGTTPQKLFVANYSQDVKQFANGFVVRIGAAANSTGTVIISPSTSATIRKIYPAFMLGSSVGNFSDGKMGRFFNHTLVLLPDGCGTLLRAFYCILEPRSGNHCPAGNSYTSFATYHTPATDCSDGNYNRNASLNSFKEYFNLRNCTFMYTYNITEDEILEWFGITQTAQGVHLFSSRYVDLYGGNMFQFATLPVYDTIKYYSIIPHSIRSIQSDRKAWAAFYVYKLQPLTFLLDFSVDGYIRRAIDCGFNDLSQLHCSYESFDVESGVYSVSSFEAKPSGSVVEQAEGVECDFSPLLSGTPPQVYNFKRLVFTNCNYNLTKLLSLFSVNDFTCSQISPAAIASNCYSSLILDYFSYPLSMKSDLSVSSAGPISQFNYKQSFSNPTCLILATVPHNLTTITKPLKYSYINKCSRFLSDDRTEVPQLVNANQYSPCVSIVPSTVWEDGDYYRKQLSPLEGGGWLVASGSTVAMTEQLQMGFGITVQYGTDTNSVCPKLEFANDTKIASQLGNCVEYSLYGVSGRGVFQNCTAVGVRQQRFVYDAYQNLVGYYSDDGNYYCLRACVSVPVSVIYDKETKTHATLFGSVACEHISSTMSQYSRSTRSMLKRRDSTYGPLQTPVGCVLGLVNSSLFVEDCKLPLGQSLCALPDTPSTLTPRSVRSVPGEMRLASIAFNHPIQVDQLNSSYFKLSIPTNFSFGVTQEYIQTTIQKVTVDCKQYVCNGFQKCEQLLREYGQFCSKINQALHGANLRQDDSVRNLFASVKSSQSSPIIPGFGGDFNLTLLEPVSISTGSRSARSAIEDLLFDKVTIADPGYMQGYDDCMQQGPASARDLICAQYVAGYKVLPPLMDVNMEAAYTSSLLGSIAGVGWTAGLSSFAAIPFAQSIFYRLNGVGITQQVLSENQKLIANKFNQALGAMQTGFTTTNEAFHKVQDAVNNNAQALSKLASELSNTFGAISASIGDIIQRLDVLEQDAQIDRLINGRLTTLNAFVAQQLVRSESAALSAQLAKDKVNECVKAQSKRSGFCGQGTHIVSFVVNAPNGLYFMHVGYYPSNHIEVVSAYGLCDAANPTNCIAPVNGYFIKTNNTRIVDEWSYTGSSFYAPEPITSLNTKYVAPQVTYQNISTNLPPPLLGNSTGIDFQDELDEFFKNVSTSIPNFGSLTQINTTLLDLTYEMLSLQQVVKALNESYIDLKELGNYTYYNKWPWYIWLGFIAGLVALALCVFFILCCTGCGTNCMGKLKCNRCCDRYEEYDLEPHKVHVH.

The N-terminal stretch at 1 to 17 (MIHSVFLLMFLLTPTES) is a signal peptide. The BetaCoV S1-NTD domain occupies 18–351 (YVDVGPDSVK…NDLSQLHCSY (334 aa)). The Extracellular segment spans residues 18-1296 (YVDVGPDSVK…GNYTYYNKWP (1279 aa)). N-linked (GlcNAc...) asparagine; by host glycosylation is found at Asn66, Asn104, Asn125, Asn155, Asn166, Asn222, Asn236, and Asn244. A disulfide bond links Cys185 and Cys237. 2 cysteine pairs are disulfide-bonded: Cys339-Cys349 and Cys383-Cys407. In terms of domain architecture, BetaCoV S1-CTD spans 381–587 (VECDFSPLLS…GTDTNSVCPK (207 aa)). Residue Asn410 is glycosylated (N-linked (GlcNAc...) asparagine; by host). Disulfide bonds link Cys425/Cys478 and Cys437/Cys585. 7 N-linked (GlcNAc...) asparagine; by host glycosylation sites follow: Asn487, Asn592, Asn619, Asn719, Asn774, Asn785, and Asn870. 2 fusion peptide regions span residues 888–909 (SAIE…MQGY) and 907–929 (QGYD…AQYV). The cysteines at positions 912 and 925 are disulfide-linked. Residues 994–1044 (QKLIANKFNQALGAMQTGFTTTNEAFHKVQDAVNNNAQALSKLASELSNTF) form a heptad repeat 1 region. Residues 1023–1067 (QDAVNNNAQALSKLASELSNTFGAISASIGDIIQRLDVLEQDAQI) adopt a coiled-coil conformation. 7 N-linked (GlcNAc...) asparagine; by host glycosylation sites follow: Asn1176, Asn1213, Asn1225, Asn1241, Asn1256, Asn1277, and Asn1288. The heptad repeat 2 stretch occupies residues 1246–1285 (IPNFGSLTQINTTLLDLTYEMLSLQQVVKALNESYIDLKE). Positions 1258–1286 (TLLDLTYEMLSLQQVVKALNESYIDLKEL) form a coiled coil. Residues 1297 to 1317 (WYIWLGFIAGLVALALCVFFI) form a helical membrane-spanning segment. Over 1318–1353 (LCCTGCGTNCMGKLKCNRCCDRYEEYDLEPHKVHVH) the chain is Cytoplasmic. The KxHxx motif lies at 1351 to 1353 (HVH).

The protein belongs to the betacoronaviruses spike protein family. In terms of assembly, homotrimer; each monomer consists of a S1 and a S2 subunit. The resulting peplomers protrude from the virus surface as spikes. S1 interacts with murine DPP4. Specific enzymatic cleavages in vivo yield mature proteins. The precursor is processed into S1 and S2 by host cell furin or another cellular protease to yield the mature S1 and S2 proteins. Additionally, a second cleavage leads to the release of a fusion peptide after viral attachment to host cell receptor. Post-translationally, the cytoplasmic Cys-rich domain is palmitoylated. Spike glycoprotein is digested within host endosomes.

The protein localises to the virion membrane. It localises to the host endoplasmic reticulum-Golgi intermediate compartment membrane. Its subcellular location is the host cell membrane. Functionally, attaches the virion to the cell membrane by interacting with host receptor, initiating the infection. Interacts with host DPP4 to mediate virla entry. Mediates fusion of the virion and cellular membranes by acting as a class I viral fusion protein. Under the current model, the protein has at least three conformational states: pre-fusion native state, pre-hairpin intermediate state, and post-fusion hairpin state. During viral and target cell membrane fusion, the coiled coil regions (heptad repeats) assume a trimer-of-hairpins structure, positioning the fusion peptide in close proximity to the C-terminal region of the ectodomain. The formation of this structure appears to drive apposition and subsequent fusion of viral and target cell membranes. Its function is as follows. Acts as a viral fusion peptide which is unmasked following S2 cleavage occurring upon virus endocytosis. This is Spike glycoprotein from Middle East respiratory syndrome-related coronavirus (isolate United Kingdom/H123990006/2012) (MERS-CoV).